The sequence spans 453 residues: Aminodeoxychorismate synthase component 1 (453 aa).

Residues serine 36, 43–46 (YSRF), and 240–242 (PFS) contribute to the L-tryptophan site. The Proton donor role is filled by glutamate 258. The active-site N6-(4-deoxychorismate)-lysine intermediate is the lysine 274.

The protein belongs to the anthranilate synthase component I family. In terms of assembly, monomer. Heterodimer consisting of two non-identical subunits: a glutamine amidotransferase subunit (PabA) and a aminodeoxychorismate synthase subunit (PabB). Mg(2+) is required as a cofactor.

It catalyses the reaction chorismate + L-glutamine = 4-amino-4-deoxychorismate + L-glutamate. Its pathway is cofactor biosynthesis; tetrahydrofolate biosynthesis; 4-aminobenzoate from chorismate: step 1/2. Inhibited by 6-diazo-5-oxo-L-norleucine (DON). The inhibition is competitive with glutamine but uncompetitive with chorismate. Also inhibited by 2-fluorochorismate. Functionally, part of a heterodimeric complex that catalyzes the two-step biosynthesis of 4-amino-4-deoxychorismate (ADC), a precursor of p-aminobenzoate (PABA) and tetrahydrofolate. In the first step, a glutamine amidotransferase (PabA) generates ammonia as a substrate that, along with chorismate, is used in the second step, catalyzed by aminodeoxychorismate synthase (PabB) to produce ADC. PabB, in the absence of PabA, can catalyze the formation of ADC in the presence of exogenous ammonia. This chain is Aminodeoxychorismate synthase component 1 (pabB), found in Escherichia coli (strain K12).